The sequence spans 466 residues: Coproporphyrinogen III oxidase (466 aa).

FAD-binding positions include 9 to 14, 34 to 35, K42, 56 to 59, V254, and 446 to 448; these read GAGITG, EA, GPES, and VGL.

This sequence belongs to the protoporphyrinogen/coproporphyrinogen oxidase family. Coproporphyrinogen III oxidase subfamily. It depends on FAD as a cofactor.

The protein resides in the cytoplasm. It carries out the reaction coproporphyrinogen III + 3 O2 = coproporphyrin III + 3 H2O2. It functions in the pathway porphyrin-containing compound metabolism; protoheme biosynthesis. Its activity is regulated as follows. The generation of protoporphyrin IX, but not coproporphyrin III, is stimulated by heme-bound HemQ. This stimulatory effect is mediated by superoxide. Inhibited by acifluorfen analogs. Functionally, involved in coproporphyrin-dependent heme b biosynthesis. Catalyzes the oxidation of coproporphyrinogen III to coproporphyrin III. Can also oxidize protoporphyrinogen IX. The sequence is that of Coproporphyrinogen III oxidase from Staphylococcus aureus (strain NCTC 8325 / PS 47).